A 200-amino-acid polypeptide reads, in one-letter code: Ribosome maturation factor RimP (200 aa).

The protein belongs to the RimP family.

The protein localises to the cytoplasm. In terms of biological role, required for maturation of 30S ribosomal subunits. This chain is Ribosome maturation factor RimP, found in Polaromonas sp. (strain JS666 / ATCC BAA-500).